Consider the following 823-residue polypeptide: Apoptosis-resistant E3 ubiquitin protein ligase 1 (823 aa).

The Filamin repeat unit spans residues 64–158; sequence WDWKDPYEVG…VAYSPYYKIF (95 aa). The tract at residues 315 to 345 is disordered; sequence PPMHMSSSQRRPSTAIEEDDEDSPSECHTPE. Residues 483 to 789 are interaction with SOCS2; that stretch reads SISDWSKNFE…THSTLPTAHT (307 aa). In terms of domain architecture, HECT spans 483–823; sequence SISDWSKNFE…SEGCEGFGML (341 aa). The Glycyl thioester intermediate role is filled by Cys790.

As to quaternary structure, interacts with SOCS2. Interacts (via HECT domain) with HTRA2, DIABLO/SMAC and SEPTIN4; in the cytoplasm following induction of apoptosis. Autoubiquitinated in vitro in the presence of E2 enzyme UBE2D1/UBCH5A. Detected in brain, testis, heart, liver, lung and kidney with very low levels in skeletal muscle and spleen.

It carries out the reaction S-ubiquitinyl-[E2 ubiquitin-conjugating enzyme]-L-cysteine + [acceptor protein]-L-lysine = [E2 ubiquitin-conjugating enzyme]-L-cysteine + N(6)-ubiquitinyl-[acceptor protein]-L-lysine.. It participates in protein modification; protein ubiquitination. In terms of biological role, E3 ubiquitin-protein ligase that catalyzes 'Lys-11'- or 'Lys-33'-linked polyubiquitin chains, with some preference for 'Lys-33' linkages. E3 ubiquitin-protein ligases accept ubiquitin from an E2 ubiquitin-conjugating enzyme in the form of a thioester and then directly transfers the ubiquitin to targeted substrates. Ubiquitinates SEPTIN4, DIABLO/SMAC and HTRA2 in vitro. Modulates pulmonary inflammation by targeting SOCS2 for ubiquitination and subsequent degradation by the proteasome. The protein is Apoptosis-resistant E3 ubiquitin protein ligase 1 (Arel1) of Mus musculus (Mouse).